Reading from the N-terminus, the 65-residue chain is Weak neurotoxin 8 (65 aa).

Intrachain disulfides connect cysteine 3–cysteine 24, cysteine 6–cysteine 11, cysteine 17–cysteine 42, cysteine 46–cysteine 57, and cysteine 58–cysteine 63.

It belongs to the three-finger toxin family. Ancestral subfamily. Orphan group II sub-subfamily. As to expression, expressed by the venom gland.

The protein localises to the secreted. Binds with low affinity to muscular (alpha-1-beta-1-delta-epsilon/CHRNA1-CHRNB1-CHRND-CHRNE) and very low affinity to neuronal (alpha-7/CHRNA7) nicotinic acetylcholine receptor (nAChR). The polypeptide is Weak neurotoxin 8 (Naja naja (Indian cobra)).